The chain runs to 120 residues: MRLPAQLLGLLMLWIPGSSADIVMTQTPLSLSVTPGQPASISCKSSQSLLHSDGKTYLYWYLQKPGQPPQLLIYEVSNRFSGVPDRFSGSGSGTDFTLKISRVEAEDVGVYYCMQSIQLP.

The signal sequence occupies residues 1 to 20; it reads MRLPAQLLGLLMLWIPGSSA. The framework-1 stretch occupies residues 21–43; sequence DIVMTQTPLSLSVTPGQPASISC. The Ig-like domain maps to 21–120; sequence DIVMTQTPLS…YYCMQSIQLP (100 aa). Cys-43 and Cys-113 are disulfide-bonded. The interval 44 to 59 is complementarity-determining-1; sequence KSSQSLLHSDGKTYLY. A framework-2 region spans residues 60 to 74; that stretch reads WYLQKPGQPPQLLIY. The interval 75-81 is complementarity-determining-2; that stretch reads EVSNRFS. Residues 82–113 are framework-3; the sequence is GVPDRFSGSGSGTDFTLKISRVEAEDVGVYYC. The tract at residues 114 to 120 is complementarity-determining-3; sequence MQSIQLP.

In terms of assembly, immunoglobulins are composed of two identical heavy chains and two identical light chains; disulfide-linked.

The protein localises to the secreted. It localises to the cell membrane. Functionally, v region of the variable domain of immunoglobulin light chains that participates in the antigen recognition. Immunoglobulins, also known as antibodies, are membrane-bound or secreted glycoproteins produced by B lymphocytes. In the recognition phase of humoral immunity, the membrane-bound immunoglobulins serve as receptors which, upon binding of a specific antigen, trigger the clonal expansion and differentiation of B lymphocytes into immunoglobulins-secreting plasma cells. Secreted immunoglobulins mediate the effector phase of humoral immunity, which results in the elimination of bound antigens. The antigen binding site is formed by the variable domain of one heavy chain, together with that of its associated light chain. Thus, each immunoglobulin has two antigen binding sites with remarkable affinity for a particular antigen. The variable domains are assembled by a process called V-(D)-J rearrangement and can then be subjected to somatic hypermutations which, after exposure to antigen and selection, allow affinity maturation for a particular antigen. In Homo sapiens (Human), this protein is Immunoglobulin kappa variable 2D-29.